Consider the following 234-residue polypeptide: MAAKIFCLLMLLGLSASAATATIFTQCSQAPIASLLPPYLSSAVSSVCENPILQPYRIQQAIAAGILPLSPLFLQQSSALLQQLPLVHLLAQNIRAQQLQQLVLANLAAYSQQQQFLPFNQLGSLNSASYLQQQQLPFSQLPAAYPQQFLPFNQLAALNSPAYLQQQQLLPFSQLAGVSPATFLTQPQLLPFYQHVAPNAGTLLQLQQLLPFNQLALTNPAVFYQQPIIGGALF.

The signal sequence occupies residues 1-21; sequence MAAKIFCLLMLLGLSASAATA.

It belongs to the zein family.

In terms of biological role, zeins are major seed storage proteins. In Zea mays (Maize), this protein is Zein-alpha GZ19AB11.